We begin with the raw amino-acid sequence, 163 residues long: Disulfide bond formation protein B (163 aa).

Residues 1-9 (MKKLTYRKI) lie on the Cytoplasmic side of the membrane. The helical transmembrane segment at 10-26 (QSFQAIITVLVIFASFY) threads the bilayer. The Periplasmic segment spans residues 27–44 (LEYAAGLQPCPLCLMQRV). A disulfide bridge connects residues C36 and C39. Residues 45-58 (CVFILLGLMGVSLG) traverse the membrane as a helical segment. Over 59-64 (TVKKAH) the chain is Cytoplasmic. Residues 65 to 82 (IVSLIQFQVACAGLYFSL) traverse the membrane as a helical segment. The Periplasmic segment spans residues 83–139 (RQLWLQSLPSDQAPACMPGLDVLIQYFPWQTVAKALFWGAGDCAEVTWTMFGVSMPG). The cysteines at positions 98 and 125 are disulfide-linked. A helical transmembrane segment spans residues 140–158 (WAAMYFLSMAIMGLFLFFR). Over 159 to 163 (TRTIN) the chain is Cytoplasmic.

It belongs to the DsbB family.

Its subcellular location is the cell inner membrane. Functionally, required for disulfide bond formation in some periplasmic proteins. Acts by oxidizing the DsbA protein. The sequence is that of Disulfide bond formation protein B from Legionella pneumophila (strain Lens).